Here is a 101-residue protein sequence, read N- to C-terminus: Small ribosomal subunit protein uS14 (101 aa).

Belongs to the universal ribosomal protein uS14 family. Part of the 30S ribosomal subunit. Contacts proteins S3 and S10.

Its function is as follows. Binds 16S rRNA, required for the assembly of 30S particles and may also be responsible for determining the conformation of the 16S rRNA at the A site. This Shewanella sediminis (strain HAW-EB3) protein is Small ribosomal subunit protein uS14.